We begin with the raw amino-acid sequence, 595 residues long: Elongation factor 4 (595 aa).

Residues 2–184 (SHIRNFSIIA…RLVATIPPPT (183 aa)) form the tr-type G domain. GTP contacts are provided by residues 14 to 19 (DHGKST) and 131 to 134 (NKMD).

It belongs to the TRAFAC class translation factor GTPase superfamily. Classic translation factor GTPase family. LepA subfamily.

The protein localises to the cell inner membrane. The catalysed reaction is GTP + H2O = GDP + phosphate + H(+). In terms of biological role, required for accurate and efficient protein synthesis under certain stress conditions. May act as a fidelity factor of the translation reaction, by catalyzing a one-codon backward translocation of tRNAs on improperly translocated ribosomes. Back-translocation proceeds from a post-translocation (POST) complex to a pre-translocation (PRE) complex, thus giving elongation factor G a second chance to translocate the tRNAs correctly. Binds to ribosomes in a GTP-dependent manner. This Pseudomonas syringae pv. tomato (strain ATCC BAA-871 / DC3000) protein is Elongation factor 4.